An 880-amino-acid polypeptide reads, in one-letter code: Alanine--tRNA ligase (880 aa).

Residues histidine 567, histidine 571, cysteine 669, and histidine 673 each coordinate Zn(2+).

The protein belongs to the class-II aminoacyl-tRNA synthetase family. The cofactor is Zn(2+).

The protein localises to the cytoplasm. It carries out the reaction tRNA(Ala) + L-alanine + ATP = L-alanyl-tRNA(Ala) + AMP + diphosphate. Catalyzes the attachment of alanine to tRNA(Ala) in a two-step reaction: alanine is first activated by ATP to form Ala-AMP and then transferred to the acceptor end of tRNA(Ala). Also edits incorrectly charged Ser-tRNA(Ala) and Gly-tRNA(Ala) via its editing domain. The protein is Alanine--tRNA ligase of Syntrophomonas wolfei subsp. wolfei (strain DSM 2245B / Goettingen).